We begin with the raw amino-acid sequence, 149 residues long: Protein-export protein SecB (149 aa).

It belongs to the SecB family. As to quaternary structure, homotetramer, a dimer of dimers. One homotetramer interacts with 1 SecA dimer.

The protein localises to the cytoplasm. Functionally, one of the proteins required for the normal export of preproteins out of the cell cytoplasm. It is a molecular chaperone that binds to a subset of precursor proteins, maintaining them in a translocation-competent state. It also specifically binds to its receptor SecA. This is Protein-export protein SecB from Acidithiobacillus ferrooxidans (strain ATCC 23270 / DSM 14882 / CIP 104768 / NCIMB 8455) (Ferrobacillus ferrooxidans (strain ATCC 23270)).